A 466-amino-acid chain; its full sequence is Glutamate-1-semialdehyde 2,1-aminomutase (466 aa).

N6-(pyridoxal phosphate)lysine is present on K292.

The protein belongs to the class-III pyridoxal-phosphate-dependent aminotransferase family. HemL subfamily. In terms of assembly, homodimer. Requires pyridoxal 5'-phosphate as cofactor.

The protein localises to the cytoplasm. The catalysed reaction is (S)-4-amino-5-oxopentanoate = 5-aminolevulinate. Its pathway is porphyrin-containing compound metabolism; protoporphyrin-IX biosynthesis; 5-aminolevulinate from L-glutamyl-tRNA(Glu): step 2/2. This chain is Glutamate-1-semialdehyde 2,1-aminomutase, found in Tropheryma whipplei (strain TW08/27) (Whipple's bacillus).